The following is a 484-amino-acid chain: Aspartyl/glutamyl-tRNA(Asn/Gln) amidotransferase subunit B (484 aa).

The protein belongs to the GatB/GatE family. GatB subfamily. In terms of assembly, heterotrimer of A, B and C subunits.

The enzyme catalyses L-glutamyl-tRNA(Gln) + L-glutamine + ATP + H2O = L-glutaminyl-tRNA(Gln) + L-glutamate + ADP + phosphate + H(+). The catalysed reaction is L-aspartyl-tRNA(Asn) + L-glutamine + ATP + H2O = L-asparaginyl-tRNA(Asn) + L-glutamate + ADP + phosphate + 2 H(+). In terms of biological role, allows the formation of correctly charged Asn-tRNA(Asn) or Gln-tRNA(Gln) through the transamidation of misacylated Asp-tRNA(Asn) or Glu-tRNA(Gln) in organisms which lack either or both of asparaginyl-tRNA or glutaminyl-tRNA synthetases. The reaction takes place in the presence of glutamine and ATP through an activated phospho-Asp-tRNA(Asn) or phospho-Glu-tRNA(Gln). The sequence is that of Aspartyl/glutamyl-tRNA(Asn/Gln) amidotransferase subunit B from Bordetella pertussis (strain Tohama I / ATCC BAA-589 / NCTC 13251).